The primary structure comprises 62 residues: DNA-directed RNA polymerase subunit Rpo10 (62 aa).

Zn(2+) contacts are provided by cysteine 6, cysteine 9, cysteine 43, and cysteine 44.

This sequence belongs to the archaeal Rpo10/eukaryotic RPB10 RNA polymerase subunit family. As to quaternary structure, part of the RNA polymerase complex. Zn(2+) is required as a cofactor.

The protein localises to the cytoplasm. It catalyses the reaction RNA(n) + a ribonucleoside 5'-triphosphate = RNA(n+1) + diphosphate. In terms of biological role, DNA-dependent RNA polymerase (RNAP) catalyzes the transcription of DNA into RNA using the four ribonucleoside triphosphates as substrates. This Methanosarcina mazei (strain ATCC BAA-159 / DSM 3647 / Goe1 / Go1 / JCM 11833 / OCM 88) (Methanosarcina frisia) protein is DNA-directed RNA polymerase subunit Rpo10.